Consider the following 596-residue polypeptide: Elongation factor 4 (596 aa).

The region spanning 2–184 (KNIRNFSIIA…TIVKNIPSPA (183 aa)) is the tr-type G domain. GTP is bound by residues 14-19 (DHGKST) and 131-134 (NKID).

This sequence belongs to the TRAFAC class translation factor GTPase superfamily. Classic translation factor GTPase family. LepA subfamily.

The protein resides in the cell inner membrane. It catalyses the reaction GTP + H2O = GDP + phosphate + H(+). Functionally, required for accurate and efficient protein synthesis under certain stress conditions. May act as a fidelity factor of the translation reaction, by catalyzing a one-codon backward translocation of tRNAs on improperly translocated ribosomes. Back-translocation proceeds from a post-translocation (POST) complex to a pre-translocation (PRE) complex, thus giving elongation factor G a second chance to translocate the tRNAs correctly. Binds to ribosomes in a GTP-dependent manner. This chain is Elongation factor 4, found in Colwellia psychrerythraea (strain 34H / ATCC BAA-681) (Vibrio psychroerythus).